The following is a 326-amino-acid chain: Phospho-N-acetylmuramoyl-pentapeptide-transferase (326 aa).

A run of 10 helical transmembrane segments spans residues isoleucine 2–phenylalanine 22, valine 51–valine 71, leucine 73–isoleucine 93, isoleucine 113–glutamate 133, glycine 143–serine 163, glycine 175–threonine 195, methionine 199–asparagine 219, isoleucine 225–leucine 245, methionine 250–isoleucine 270, and valine 305–leucine 325.

Belongs to the glycosyltransferase 4 family. MraY subfamily. Mg(2+) serves as cofactor.

It is found in the cell membrane. The catalysed reaction is UDP-N-acetyl-alpha-D-muramoyl-L-alanyl-gamma-D-glutamyl-meso-2,6-diaminopimeloyl-D-alanyl-D-alanine + di-trans,octa-cis-undecaprenyl phosphate = di-trans,octa-cis-undecaprenyl diphospho-N-acetyl-alpha-D-muramoyl-L-alanyl-D-glutamyl-meso-2,6-diaminopimeloyl-D-alanyl-D-alanine + UMP. It functions in the pathway cell wall biogenesis; peptidoglycan biosynthesis. In terms of biological role, catalyzes the initial step of the lipid cycle reactions in the biosynthesis of the cell wall peptidoglycan: transfers peptidoglycan precursor phospho-MurNAc-pentapeptide from UDP-MurNAc-pentapeptide onto the lipid carrier undecaprenyl phosphate, yielding undecaprenyl-pyrophosphoryl-MurNAc-pentapeptide, known as lipid I. The sequence is that of Phospho-N-acetylmuramoyl-pentapeptide-transferase from Wolbachia sp. subsp. Drosophila simulans (strain wRi).